The primary structure comprises 416 residues: UDP-N-acetylmuramoylalanine--D-glutamate ligase (416 aa).

104 to 110 (GSNGKST) is a binding site for ATP.

This sequence belongs to the MurCDEF family.

The protein resides in the cytoplasm. The enzyme catalyses UDP-N-acetyl-alpha-D-muramoyl-L-alanine + D-glutamate + ATP = UDP-N-acetyl-alpha-D-muramoyl-L-alanyl-D-glutamate + ADP + phosphate + H(+). The protein operates within cell wall biogenesis; peptidoglycan biosynthesis. Functionally, cell wall formation. Catalyzes the addition of glutamate to the nucleotide precursor UDP-N-acetylmuramoyl-L-alanine (UMA). The chain is UDP-N-acetylmuramoylalanine--D-glutamate ligase from Francisella tularensis subsp. mediasiatica (strain FSC147).